The sequence spans 380 residues: Cytochrome b (380 aa).

4 helical membrane passes run 34-54, 78-99, 114-134, and 179-199; these read FGSL…LLAM, WLIR…YLHI, WNTG…GYVL, and FFAL…IHLT. Heme b contacts are provided by histidine 84 and histidine 98. Heme b contacts are provided by histidine 183 and histidine 197. Residue histidine 202 coordinates a ubiquinone. 4 helical membrane passes run 227-247, 289-309, 321-341, and 348-368; these read LKDI…ALFS, LGGV…PFLH, LSQL…WVGS, and FIII…ILFP.

It belongs to the cytochrome b family. As to quaternary structure, the cytochrome bc1 complex contains 11 subunits: 3 respiratory subunits (MT-CYB, CYC1 and UQCRFS1), 2 core proteins (UQCRC1 and UQCRC2) and 6 low-molecular weight proteins (UQCRH/QCR6, UQCRB/QCR7, UQCRQ/QCR8, UQCR10/QCR9, UQCR11/QCR10 and a cleavage product of UQCRFS1). This cytochrome bc1 complex then forms a dimer. The cofactor is heme b.

It localises to the mitochondrion inner membrane. Its function is as follows. Component of the ubiquinol-cytochrome c reductase complex (complex III or cytochrome b-c1 complex) that is part of the mitochondrial respiratory chain. The b-c1 complex mediates electron transfer from ubiquinol to cytochrome c. Contributes to the generation of a proton gradient across the mitochondrial membrane that is then used for ATP synthesis. The polypeptide is Cytochrome b (MT-CYB) (Daption capense (Cape petrel)).